Reading from the N-terminus, the 522-residue chain is GMP synthase [glutamine-hydrolyzing] (522 aa).

Positions 5-204 constitute a Glutamine amidotransferase type-1 domain; sequence YILIIDFGSQ…VKNICNYTNV (200 aa). C82 acts as the Nucleophile in catalysis. Catalysis depends on residues H178 and E180. The GMPS ATP-PPase domain maps to 205 to 397; it reads IKYSLSIRKI…IGIPKEIIFR (193 aa). 232–238 provides a ligand contact to ATP; sequence SGGIDSF.

In terms of assembly, homodimer.

It carries out the reaction XMP + L-glutamine + ATP + H2O = GMP + L-glutamate + AMP + diphosphate + 2 H(+). Its pathway is purine metabolism; GMP biosynthesis; GMP from XMP (L-Gln route): step 1/1. Its function is as follows. Catalyzes the synthesis of GMP from XMP. This chain is GMP synthase [glutamine-hydrolyzing], found in Wigglesworthia glossinidia brevipalpis.